Consider the following 733-residue polypeptide: Cyclic nucleotide-gated channel (733 aa).

Disordered regions lie at residues 1–33 and 67–95; these read MSTA…PTAS and PNGN…IEVP. Topologically, residues 1–125 are cytoplasmic; that stretch reads MSTAEPAPDP…PSTDNFYYWT (125 aa). Residues 12–25 are compositionally biased toward polar residues; that stretch reads NPSTSGLAPTTNGI. A helical transmembrane segment spans residues 126-148; the sequence is CVVTVAYIYNLLFVIARQVFNDL. Topologically, residues 149–197 are extracellular; sequence IGPSSQSLCRFYNGTLNSTTQVECTYNMLTNMKEMPTYSQYPDLGWSKY. Residues 198 to 217 traverse the membrane as a helical segment; it reads WHFRMLWVFFDLLMDCVYLI. Residues 218–251 lie on the Cytoplasmic side of the membrane; it reads DTFLNYRMGYMDQGLVVREAEKVTKAYWQSKQYR. The chain crosses the membrane as a helical span at residues 252-265; it reads IDGISLIPLDYILG. Over 266-276 the chain is Extracellular; that stretch reads WPIPYINWRGL. Residues 277-287 form a helical membrane-spanning segment; the sequence is PILRLNRLIRY. At 288 to 308 the chain is on the cytoplasmic side; sequence KRVRNCLERTETRSSMPNAFR. Residues 309–331 form a helical membrane-spanning segment; that stretch reads VVVVVWYIVIIIHWNACLYFWIS. Topologically, residues 332-362 are extracellular; sequence EWIGLGTDAWVYGHLNKQSLPDDITDTLLRR. Transmembrane regions (helical) follow at residues 363–385 and 386–411; these read YVYS…SPVR and NIEY…GNVG. The tract at residues 376–379 is selectivity filter; it reads TIGE. Glu-379 is a Na(+) binding site. Topologically, residues 412-733 are cytoplasmic; the sequence is SMISNMSAAR…TGTESESLLK (322 aa). The interval 419 to 496 is C-linker; it reads AARTEFQNKM…TLRKVRIFQD (78 aa). The cyclic nucleotide-binding domain stretch occupies residues 493 to 607; the sequence is IFQDCEAGLL…ALREYPDARK (115 aa). Gly-559 provides a ligand contact to 3',5'-cyclic GMP. 3',5'-cyclic AMP is bound at residue Glu-560. 5 residues coordinate 3',5'-cyclic GMP: Ser-562, Arg-575, Thr-576, Lys-619, and Asp-620. Arg-575 is a 3',5'-cyclic AMP binding site. The disordered stretch occupies residues 694–733; that stretch reads SIDGGDISTDGVDERVRPPRLRQTKTIDLPTGTESESLLK.

This sequence belongs to the cyclic nucleotide-gated cation channel (TC 1.A.1.5) family. Homotetramer. As to expression, expressed at the sensory endings of thermosensory, gustatory, and olfactory neurons.

Its subcellular location is the cell membrane. The protein localises to the cell projection. It is found in the cilium. The catalysed reaction is Ca(2+)(in) = Ca(2+)(out). It carries out the reaction Na(+)(in) = Na(+)(out). It catalyses the reaction K(+)(in) = K(+)(out). Pore-forming subunit of the cyclic nucleotide-gated channel. Required for normal thermosensation and chemosensation sensory behavior. Required, downstream of receptor-type guanylate cyclase gcy-9, for CO2-mediated responses in BAG neurons. Required, downstream of receptor-type guanylate cyclase gcy-14, for alkaline pH-mediated responses in ASE-left (ASEL) neurons. Involved in the development of ASJ sensory neuron axon during late larval stages and in the maintenance of normal axon morphology in the adult. Regulates dauer formation. Required for the calcium flux to the cytoplasm in the ASJ sensory neurons upon the onset and removal of a nitric oxide (NO) stimulus, thereby promoting the ASJ-mediated behavioral avoidance response to NO-producing organisms like P.aeruginosa. In ASI and ASJ sensory neurons, controls behavioral response to P.aeruginosa by up-regulating the transcription of daf-7, a member of the TGF-beta family. In AWB and AWC sensory neurons, mediates the recognition of food odors which subsequently allows for the detection of preferred food sources. In AWC neurons, acts to promote expression of srsx-3, a member of the GPCR family. Binding to cGMP results in conformational changes at the hydrophobic gate that converts the protein from an inactive closed state to an active open state. The chain is Cyclic nucleotide-gated channel (tax-4) from Caenorhabditis elegans.